A 442-amino-acid polypeptide reads, in one-letter code: Myb family transcription factor PHL13 (442 aa).

The 61-residue stretch at M235–Y295 folds into the HTH myb-type domain. The segment at residues P266–R291 is a DNA-binding region (H-T-H motif). The interval T329 to Q349 is coiled coil. The LHEQLE motif lies at L342–E347. Basic and acidic residues predominate over residues Q370–S380. The interval Q370–D442 is disordered. Residues S395–S434 show a composition bias toward polar residues.

The protein belongs to the MYB-CC family.

The protein localises to the nucleus. The polypeptide is Myb family transcription factor PHL13 (Arabidopsis thaliana (Mouse-ear cress)).